Reading from the N-terminus, the 113-residue chain is Cell cycle protein GpsB (113 aa).

Residues 36 to 68 (LDMVIKDYSTFTQEIEALQAENIRLVQELDNAP) are a coiled coil.

The protein belongs to the GpsB family. As to quaternary structure, forms polymers through the coiled coil domains. Interacts with PBP1, MreC and EzrA.

It is found in the cytoplasm. Divisome component that associates with the complex late in its assembly, after the Z-ring is formed, and is dependent on DivIC and PBP2B for its recruitment to the divisome. Together with EzrA, is a key component of the system that regulates PBP1 localization during cell cycle progression. Its main role could be the removal of PBP1 from the cell pole after pole maturation is completed. Also contributes to the recruitment of PBP1 to the division complex. Not essential for septum formation. This is Cell cycle protein GpsB from Listeria welshimeri serovar 6b (strain ATCC 35897 / DSM 20650 / CCUG 15529 / CIP 8149 / NCTC 11857 / SLCC 5334 / V8).